The primary structure comprises 501 residues: Putative zinc metalloprotease TM_0890 (501 aa).

Histidine 17 contributes to the Zn(2+) binding site. Glutamate 18 is a catalytic residue. A Zn(2+)-binding site is contributed by histidine 21. Helical transmembrane passes span 93 to 115, 401 to 420, 427 to 449, and 474 to 496; these read FLITLAGPLFSILAGYLLFLPIT, VQTGQIVGVVGLAGVISAAS, VLTVVAVITISLGVLNLLPLPAL, and IIHFLGFIFLMILFLYITFLDIG. Residues 96–180 form the PDZ domain; it reads TLAGPLFSIL…LVIIRNGEKK (85 aa).

It belongs to the peptidase M50B family. Zn(2+) serves as cofactor.

The protein localises to the cell inner membrane. This Thermotoga maritima (strain ATCC 43589 / DSM 3109 / JCM 10099 / NBRC 100826 / MSB8) protein is Putative zinc metalloprotease TM_0890.